The following is a 412-amino-acid chain: Maltoporin (412 aa).

The N-terminal stretch at 1–22 (MKKVSVIAAAVAATLAAGSAFA) is a signal peptide.

Belongs to the porin LamB (TC 1.B.3) family. In terms of assembly, homotrimer formed of three 18-stranded antiparallel beta-barrels, containing three independent channels.

Its subcellular location is the cell outer membrane. The enzyme catalyses beta-maltose(in) = beta-maltose(out). Its function is as follows. Involved in the transport of maltose and maltodextrins. The sequence is that of Maltoporin from Vibrio cholerae serotype O1 (strain ATCC 39315 / El Tor Inaba N16961).